Consider the following 3595-residue polypeptide: Replicase polyprotein 1ab (3595 aa).

Residues 3–23 form a C4-type; atypical zinc finger; that stretch reads CECPRSNLVVMCSGAFCCVLC. The Peptidase C31 domain occupies 56-164; the sequence is SGLEGRYCAL…PTTIPFNTTG (109 aa). Catalysis depends on for Nsp1-alpha papain-like cysteine proteinase activity residues Cys63 and His130. Residues 239-350 enclose the Peptidase C32 domain; it reads LSFEHGRCWL…LKLPGKTYFG (112 aa). Residues Cys246 and His309 each act as for Nsp1-beta papain-like cysteine proteinase activity in the active site. Catalysis depends on for Nsp2 cysteine proteinase activity residues Cys378 and His430. The tract at residues 482–527 is disordered; it reads RRGGGKKSGQSSGVRAPGRTTPDLAGDWGKAVDDQEKTASKVTTDK. Basic and acidic residues predominate over residues 511-520; the sequence is KAVDDQEKTA. Positions 633-736 constitute a Peptidase C33 domain; that stretch reads TFIPPPDGGC…HGWCSSLLSE (104 aa). The disordered stretch occupies residues 808 to 862; the sequence is QVRTVDPSQPAAPLPPVPRPRKRKAAAQQVSKVPSEQDPSLAHDPPEKPDSVRPP. Basic and acidic residues predominate over residues 851-860; that stretch reads DPPEKPDSVR. The next 7 helical transmembrane spans lie at 922–942, 951–971, 1019–1039, 1239–1259, 1316–1336, 1345–1365, and 1381–1401; these read MFFL…AGVI, ILCC…AISS, VALF…VIGV, IFRT…GYWV, PYIV…PGII, ALLP…IIAA, and AFVD…GWIL. Positions 922 to 1039 are HD1; that stretch reads MFFLFLGSPL…MVDVLLVIGV (118 aa). Residues 1239–1399 form an HD2 region; the sequence is IFRTALAAAW…VVLTALLVGW (161 aa). Residues 1464–1664 enclose the Peptidase S32 domain; that stretch reads GLLREKTRAS…RLLESSINLE (201 aa). Residues His1502, Asp1527, and Ser1580 each act as charge relay system; for 3C-like serine proteinase activity in the active site. Helical transmembrane passes span 1673 to 1693, 1711 to 1731, 1744 to 1764, and 1784 to 1804; these read IIVA…PFVV, YNYS…IFFI, ALIC…IILG, and AIAI…LELF. The segment at 1687–1804 is HD3; that stretch reads LSIPFVVAFF…CVAACCLELF (118 aa). Residues 2083-2253 enclose the NiRAN domain; the sequence is DMNRLRAIIS…YPYKLHPVRG (171 aa). The region spanning 2491-2625 is the RdRp catalytic domain; sequence GRCLETDLAS…LNESDDLPNF (135 aa). An AV ZBD domain is found at 2746 to 2812; it reads GKEVQVCSIC…IPILKDRTKF (67 aa). Positions 2752, 2755, 2765, 2770, 2773, 2777, 2779, 2782, 2789, 2791, 2798, and 2801 each coordinate Zn(2+). The 161-residue stretch at 2862–3022 folds into the (+)RNA virus helicase ATP-binding domain; sequence DLPDGKYSMK…VFELMKKNAL (161 aa). 2897–2904 lines the ATP pocket; that stretch reads GPPGSGKT. The (+)RNA virus helicase C-terminal domain maps to 3023–3157; it reads HAIYRFGQNI…DGKARVMLSD (135 aa). The 97-residue stretch at 3196-3292 folds into the AV-Nsp11N/CoV-Nsp15M domain; that stretch reads SGSLSPLPRV…LTKFLDGRAV (97 aa). Residues 3294 to 3416 enclose the NendoU domain; sequence MEDSVYSTGR…MVWRDQTMYF (123 aa). Residues His3325, His3340, and Lys3369 contribute to the active site.

The protein belongs to the arteriviridae polyprotein family. Specific enzymatic cleavages in vivo by its own proteases yield mature proteins. There are two alternative pathways for processing. Either nsp4-5 is cleaved, which represents the major pathway or the nsp5-6 and nsp6-7 are processed, which represents the minor pathway. The major pathway occurs when nsp2 acts as a cofactor for nsp4.

It is found in the host membrane. It localises to the host cytoplasm. The protein resides in the host perinuclear region. It carries out the reaction RNA(n) + a ribonucleoside 5'-triphosphate = RNA(n+1) + diphosphate. The catalysed reaction is ATP + H2O = ADP + phosphate + H(+). The enzyme catalyses uridylyl-uridylyl-ribonucleotide-RNA = a 3'-end uridylyl-2',3'-cyclophospho-uridine-RNA + a 5'-end dephospho-ribonucleoside-RNA. The replicase polyprotein 1ab is a multifunctional protein: it contains the activities necessary for the transcription of negative stranded RNA, leader RNA, subgenomic mRNAs and progeny virion RNA as well as proteinases responsible for the cleavage of the polyprotein into functional products. Its function is as follows. The Nsp1 chain is essential for viral subgenomic mRNA synthesis. Functionally, the 3C-like serine proteinase chain is responsible for the majority of cleavages as it cleaves the C-terminus of the polyprotein. In terms of biological role, plays a role in viral transcription/replication and prevents the simultaneous activation of host cell dsRNA sensors, such as MDA5/IFIH1, OAS, and PKR. Acts by degrading the 5'-polyuridines generated during replication of the poly(A) region of viral genomic and subgenomic RNAs. Catalyzes a two-step reaction in which a 2'3'-cyclic phosphate (2'3'-cP) is first generated by 2'-O transesterification, which is then hydrolyzed to a 3'-phosphate (3'-P). If not degraded, poly(U) RNA would hybridize with poly(A) RNA tails and activate host dsRNA sensors. The helicase chain, which contains a zinc finger structure, displays RNA and DNA duplex-unwinding activities with 5' to 3' polarity. This chain is Replicase polyprotein 1ab (rep), found in Simian hemorrhagic fever virus (SHFV).